The sequence spans 294 residues: UDP-3-O-acyl-N-acetylglucosamine deacetylase (294 aa).

Residues His-75, His-232, and Asp-236 each coordinate Zn(2+). The Proton donor role is filled by His-259.

It belongs to the LpxC family. It depends on Zn(2+) as a cofactor.

The enzyme catalyses a UDP-3-O-[(3R)-3-hydroxyacyl]-N-acetyl-alpha-D-glucosamine + H2O = a UDP-3-O-[(3R)-3-hydroxyacyl]-alpha-D-glucosamine + acetate. It participates in glycolipid biosynthesis; lipid IV(A) biosynthesis; lipid IV(A) from (3R)-3-hydroxytetradecanoyl-[acyl-carrier-protein] and UDP-N-acetyl-alpha-D-glucosamine: step 2/6. In terms of biological role, catalyzes the hydrolysis of UDP-3-O-myristoyl-N-acetylglucosamine to form UDP-3-O-myristoylglucosamine and acetate, the committed step in lipid A biosynthesis. In Campylobacter fetus subsp. fetus (strain 82-40), this protein is UDP-3-O-acyl-N-acetylglucosamine deacetylase.